A 322-amino-acid chain; its full sequence is Nodulation protein D 1 (322 aa).

One can recognise an HTH lysR-type domain in the interval 6 to 63; that stretch reads LDLNLLVALDALMTERKLTAAARSINLSQPAMSAAITRLRTYFRDELFTMNGRELVPT. Residues 23–42 constitute a DNA-binding region (H-T-H motif); the sequence is LTAAARSINLSQPAMSAAIT.

It belongs to the LysR transcriptional regulatory family.

In terms of biological role, regulates the expression of the nod abcFE genes which encode other nodulation proteins. NodD is also a negative regulator of its own expression. Binds flavonoids as inducers. The protein is Nodulation protein D 1 (nodD1) of Sinorhizobium fredii (strain NBRC 101917 / NGR234).